A 329-amino-acid chain; its full sequence is 4-hydroxythreonine-4-phosphate dehydrogenase (329 aa).

The substrate site is built by histidine 136 and threonine 137. Residues histidine 166, histidine 211, and histidine 266 each contribute to the a divalent metal cation site. The substrate site is built by lysine 274, asparagine 283, and arginine 292.

The protein belongs to the PdxA family. In terms of assembly, homodimer. Zn(2+) serves as cofactor. Requires Mg(2+) as cofactor. Co(2+) is required as a cofactor.

It is found in the cytoplasm. It catalyses the reaction 4-(phosphooxy)-L-threonine + NAD(+) = 3-amino-2-oxopropyl phosphate + CO2 + NADH. It participates in cofactor biosynthesis; pyridoxine 5'-phosphate biosynthesis; pyridoxine 5'-phosphate from D-erythrose 4-phosphate: step 4/5. Its function is as follows. Catalyzes the NAD(P)-dependent oxidation of 4-(phosphooxy)-L-threonine (HTP) into 2-amino-3-oxo-4-(phosphooxy)butyric acid which spontaneously decarboxylates to form 3-amino-2-oxopropyl phosphate (AHAP). This chain is 4-hydroxythreonine-4-phosphate dehydrogenase, found in Escherichia coli O17:K52:H18 (strain UMN026 / ExPEC).